Reading from the N-terminus, the 99-residue chain is Beta-2-microglobulin (99 aa).

Residues 5-92 (PNVQVYSRHP…KHVTLKEPMT (88 aa)) form the Ig-like C1-type domain. Cysteine 25 and cysteine 80 form a disulfide bridge.

This sequence belongs to the beta-2-microglobulin family. In terms of assembly, heterodimer of an alpha chain and a beta chain. Beta-2-microglobulin is the beta-chain of major histocompatibility complex class I molecules.

Its subcellular location is the secreted. Functionally, component of the class I major histocompatibility complex (MHC). Involved in the presentation of peptide antigens to the immune system. In Oryctolagus cuniculus (Rabbit), this protein is Beta-2-microglobulin (B2M).